A 144-amino-acid chain; its full sequence is Large ribosomal subunit protein uL15 (144 aa).

Positions 1-54 are disordered; sequence MRLNTLSPAPGRVSAKKRVGRGIGSGLGKTAGRGHKGLKSRSGGSVKPGFEGGQ. Residues 21-31 show a composition bias toward gly residues; the sequence is RGIGSGLGKTA.

This sequence belongs to the universal ribosomal protein uL15 family. As to quaternary structure, part of the 50S ribosomal subunit.

Functionally, binds to the 23S rRNA. In Saccharophagus degradans (strain 2-40 / ATCC 43961 / DSM 17024), this protein is Large ribosomal subunit protein uL15.